We begin with the raw amino-acid sequence, 372 residues long: MRQCGLVRAAQLLRTCGLAEWHTPYRALSSLPDEKKELIKNGPDLQDFLSGELVDKSSWAAYKGDLKRQKGERLRLPPWVKTEIPMGKNYNKLKNTLRNLNLHTVCEEARCPNIGECWGGGEYGTATATIMLMGDTCTRGCRFCSVKTARNPPPLDPDEPYNTSKAIAEWGLDYVVLTSVDRDDISDGGAEHIAQTVSMLKERNKTILIECLTPDFRGNMKAVETVAKSGLDVYAHNVETVPALQRHVRDPRANFDQSLNVLKHAKNVRPDLVSKTSIMLGLGETDEQIYSTMKALREAGVDCLTLGQYMQPTKRHLKVEEYITPEKFKYWEKAGNELGFLYTASGPLVRSSYKAGEFFLKNLIEKRKTKAI.

7 residues coordinate [4Fe-4S] cluster: C106, C111, C117, C137, C141, C144, and S352. In terms of domain architecture, Radical SAM core spans 122 to 341 (EYGTATATIM…EKAGNELGFL (220 aa)).

The protein belongs to the radical SAM superfamily. Lipoyl synthase family. The cofactor is [4Fe-4S] cluster.

It is found in the mitochondrion. It catalyses the reaction [[Fe-S] cluster scaffold protein carrying a second [4Fe-4S](2+) cluster] + N(6)-octanoyl-L-lysyl-[protein] + 2 oxidized [2Fe-2S]-[ferredoxin] + 2 S-adenosyl-L-methionine + 4 H(+) = [[Fe-S] cluster scaffold protein] + N(6)-[(R)-dihydrolipoyl]-L-lysyl-[protein] + 4 Fe(3+) + 2 hydrogen sulfide + 2 5'-deoxyadenosine + 2 L-methionine + 2 reduced [2Fe-2S]-[ferredoxin]. Its pathway is protein modification; protein lipoylation via endogenous pathway; protein N(6)-(lipoyl)lysine from octanoyl-[acyl-carrier-protein]: step 2/2. In terms of biological role, catalyzes the radical-mediated insertion of two sulfur atoms into the C-6 and C-8 positions of the octanoyl moiety bound to the lipoyl domains of lipoate-dependent enzymes, thereby converting the octanoylated domains into lipoylated derivatives. This chain is Lipoyl synthase, mitochondrial (lias), found in Xenopus laevis (African clawed frog).